Consider the following 345-residue polypeptide: Dihydroorotase (345 aa).

Zn(2+)-binding residues include His13 and His15. Substrate is bound by residues 15–17 and Asn41; that span reads HLR. Zn(2+)-binding residues include Lys99, His136, and His174. Lys99 is modified (N6-carboxylysine). Substrate is bound at residue His136. Leu219 contacts substrate. Asp247 provides a ligand contact to Zn(2+). Residue Asp247 is part of the active site. Substrate contacts are provided by His251 and Ala263.

It belongs to the metallo-dependent hydrolases superfamily. DHOase family. Class II DHOase subfamily. Homodimer. It depends on Zn(2+) as a cofactor.

It catalyses the reaction (S)-dihydroorotate + H2O = N-carbamoyl-L-aspartate + H(+). The protein operates within pyrimidine metabolism; UMP biosynthesis via de novo pathway; (S)-dihydroorotate from bicarbonate: step 3/3. In terms of biological role, catalyzes the reversible cyclization of carbamoyl aspartate to dihydroorotate. This chain is Dihydroorotase, found in Acaryochloris marina (strain MBIC 11017).